Consider the following 453-residue polypeptide: uncharacterized protein (453 aa).

Disordered stretches follow at residues 140-161 (YGES…TRPQ) and 311-332 (TTTR…SASS).

This is an uncharacterized protein from Caenorhabditis elegans.